A 547-amino-acid chain; its full sequence is MDKNNNNLRLILAIALSFLFIALYSYFFQKPNKTTTQTTKQETTNNHTATSPNAPNAQHFSTTQTTPQENLLSTISFEHARIEIDSLGRIKQVYLKDKKYLTPKQKGFLEHVGHLFSSKENAQPPLKELPLLAADKLKPLEVRFLDPTLNNKAFNTPYSASKTTLGPNEQLVLTQDLGTLSIIKTLTFYDDLHYDLKIAFKSPNNLIPSYVITNGYRPVADLDSYTFSGVLLENSDKKIEKIEDKDAKEIKRFSNTLFLSSVDRYFTTLLFTKDPQGFEALIDSEIGTKNPLGFISLKNEANLHGYIGPKDYRSLKAISPMLTDVIEYGLITFFAKGVFVLLDYLYQFVGNWGWAIILLTIIVRIILYPLSYKGMVSMQKLKELAPKMKELQEKYKGEPQKLQAHMMQLYKKHGANPLGGCLPLILQIPVFFAIYRVLYNAVELKSSEWILWIHDLSIMDPYFILPLLMGASMYWHQSVTPNTMTDPMQAKIFKLLPLLFTIFLITFPAGLVLYWTTNNILSVLQQLIINKVLENKKRMHAQNKKEH.

A helical transmembrane segment spans residues 8-28; sequence LRLILAIALSFLFIALYSYFF. Residues 37-50 show a composition bias toward low complexity; it reads QTTKQETTNNHTAT. Residues 37 to 62 are disordered; sequence QTTKQETTNNHTATSPNAPNAQHFST. Polar residues predominate over residues 51-62; sequence SPNAPNAQHFST. Helical transmembrane passes span 325-345, 348-368, 414-434, 449-469, and 495-515; these read VIEY…LDYL, FVGN…IILY, GANP…FFAI, WILW…PLLM, and LLPL…VLYW.

Belongs to the OXA1/ALB3/YidC family. Type 1 subfamily. Interacts with the Sec translocase complex via SecD. Specifically interacts with transmembrane segments of nascent integral membrane proteins during membrane integration.

The protein resides in the cell inner membrane. In terms of biological role, required for the insertion and/or proper folding and/or complex formation of integral membrane proteins into the membrane. Involved in integration of membrane proteins that insert both dependently and independently of the Sec translocase complex, as well as at least some lipoproteins. Aids folding of multispanning membrane proteins. The sequence is that of Membrane protein insertase YidC from Helicobacter pylori (strain ATCC 700392 / 26695) (Campylobacter pylori).